The sequence spans 426 residues: D-tagatose-1,6-bisphosphate aldolase subunit KbaZ (426 aa).

This sequence belongs to the GatZ/KbaZ family. KbaZ subfamily. As to quaternary structure, forms a complex with KbaY.

Its pathway is carbohydrate metabolism; D-tagatose 6-phosphate degradation; D-glyceraldehyde 3-phosphate and glycerone phosphate from D-tagatose 6-phosphate: step 2/2. Component of the tagatose-1,6-bisphosphate aldolase KbaYZ that is required for full activity and stability of the Y subunit. Could have a chaperone-like function for the proper and stable folding of KbaY. When expressed alone, KbaZ does not show any aldolase activity. This is D-tagatose-1,6-bisphosphate aldolase subunit KbaZ from Escherichia coli (strain ATCC 8739 / DSM 1576 / NBRC 3972 / NCIMB 8545 / WDCM 00012 / Crooks).